Consider the following 1905-residue polypeptide: MRRWWGALLLGALLCAHGIASSLECACGRSHFTCAVSALGECTCIPAQWQCDGDNDCGDHSDEDGCTLPTCSPLDFHCDNGKCIRRSWVCDGDNDCEDDSDEQDCPPRECEEDEFPCQNGYCIRSLWHCDGDNDCGDNSDEQCDMRKCSDKEFRCSDGSCIAEHWYCDGDTDCKDGSDEESCPSAVPSPPCNLEEFQCAYGRCILDIYHCDGDDDCGDWSDESDCSSHQPCRSGEFMCDSGLCINSGWRCDGDADCDDQSDERNCTTSMCTAEQFRCRSGRCVRLSWRCDGEDDCADNSDEENCENTGSPQCASDQFLCWNGRCIGQRKLCNGINDCGDSSDESPQQNCRPRTGEENCNVNNGGCAQKCQMVRGAVQCTCHTGYRLTEDGRTCQDVNECAEEGYCSQGCTNTEGAFQCWCEAGYELRPDRRSCKALGPEPVLLFANRIDIRQVLPHRSEYTLLLNNLENAIALDFHHRRELVFWSDVTLDRILRANLNGSNVEEVVSTGLESPGGLAVDWVHDKLYWTDSGTSRIEVANLDGAHRKVLLWQSLEKPRAIALHPMEGTIYWTDWGNTPRIEASSMDGSGRRIIADTHLFWPNGLTIDYAGRRMYWVDAKHHVIERANLDGSHRKAVISQGLPHPFAITVFEDSLYWTDWHTKSINSANKFTGKNQEIIRNKLHFPMDIHTLHPQRQPAGKNRCGDNNGGCTHLCLPSGQNYTCACPTGFRKINSHACAQSLDKFLLFARRMDIRRISFDTEDLSDDVIPLADVRSAVALDWDSRDDHVYWTDVSTDTISRAKWDGTGQEVVVDTSLESPAGLAIDWVTNKLYWTDAGTDRIEVANTDGSMRTVLIWENLDRPRDIVVEPMGGYMYWTDWGASPKIERAGMDASSRQVIISSNLTWPNGLAIDYGSQRLYWADAGMKTIEFAGLDGSKRKVLIGSQLPHPFGLTLYGQRIYWTDWQTKSIQSADRLTGLDRETLQENLENLMDIHVFHRQRPPVTTLCAVENGGCSHLCLRSPNPSGFSCTCPTGINLLRDGKTCSPGMNSFLIFARRIDVRMVSLDIPYFADVVVPINMTMKNTIAIGVDPLEGKVYWSDSTLHRISRASLDGSQHEDIITTGLQTTDGLAVDAIGRKVYWTDTGTNRIEVGNLDGSMRKVLVWQNLDSPRAIVLYHEMGFMYWTDWGENAKLERSGMDGSDRTVLINNNLGWPNGLTVDKTSSQLLWADAHTERIEVADLNGANRHTLVSPVQHPYGLTLLDSYIYWTDWQTRSIHRADKSTGSNVILVRSNLPGLMDIQAVDRAQPLGFNKCGSRNGGCSHLCLPRPSGFSCACPTGIQLKGDRKTCDPSPETYLLFSSRGSIRRISLDTDDHTDVHVPVPGLNNVISLDYDSVHGKVYYTDVFLDVIRRADLNGSNMETVIGHGLKTTDGLAVDWVARNLYWTDTGRNTIEASRLDGSCRKVLINNSLDEPRAIAVFPRKGYLFWTDWGHIAKIERANLDGSERKVLINTDLGWPNGLTLDYDTRRIYWVDAHLDRIESADLNGKLRQVLVSHVSHPFALTQQDRWIYWTDWQTKSIQRVDKYSGRNKETVLANVEGLMDIIVVSPQRQTGTNACGVNNGGCTHLCFARASDFVCACPDEPDGHPCSLVPGLVPPAPRATSMNEKSPVLPNTLPTTLHSSTTKTRTSLEGAGGRCSERDAQLGLCAHSNEAVPAAPGEGLHVSYAIGGLLSILLILLVIAALMLYRHRKSKFTDPGMGNLTYSNPSYRTSTQEVKLEAAPKPAVYNQLCYKKEGGPDHSYTKEKIKIVEGIRLLAGDDAEWGDLKQLRSSRGGLLRDHVCMKTDTVSIQASSGSLDDTETEQLLQEEQSECSSVHTAATPERRGSLPDTGWKHERKLSSESQV.

The N-terminal stretch at 1–20 (MRRWWGALLLGALLCAHGIA) is a signal peptide. Over 21–1725 (SSLECACGRS…AAPGEGLHVS (1705 aa)) the chain is Extracellular. LDL-receptor class A domains are found at residues 26–67 (ACGR…DGCT), 70–106 (TCSP…QDCP), 109–144 (ECEE…EQCD), 147–183 (KCSD…ESCP), 190–226 (PCNL…SDCS), 230–266 (PCRS…RNCT), 269–305 (MCTA…ENCE), and 311–350 (QCAS…QNCR). 30 disulfide bridges follow: Cys27–Cys44, Cys34–Cys57, Cys51–Cys66, Cys71–Cys83, Cys78–Cys96, Cys90–Cys105, Cys110–Cys122, Cys117–Cys135, Cys129–Cys143, Cys148–Cys160, Cys155–Cys173, Cys167–Cys182, Cys191–Cys203, Cys198–Cys216, Cys210–Cys225, Cys231–Cys243, Cys238–Cys256, Cys250–Cys265, Cys270–Cys282, Cys277–Cys295, Cys289–Cys304, Cys312–Cys324, Cys319–Cys337, Cys331–Cys349, Cys358–Cys369, Cys365–Cys378, Cys380–Cys393, Cys399–Cys409, Cys405–Cys418, and Cys420–Cys433. Residue Asn264 is glycosylated (N-linked (GlcNAc...) asparagine). The EGF-like 1; atypical domain occupies 354–394 (GEENCNVNNGGCAQKCQMVRGAVQCTCHTGYRLTEDGRTCQ). The EGF-like 2; calcium-binding domain maps to 395-434 (DVNECAEEGYCSQGCTNTEGAFQCWCEAGYELRPDRRSCK). LDL-receptor class B repeat units lie at residues 480 to 522 (ELVF…DWVH), 523 to 565 (DKLY…HPME), 566 to 609 (GTIY…DYAG), 610 to 652 (RRMY…FEDS), and 653 to 693 (LYWT…LHPQ). A glycan (N-linked (GlcNAc...) asparagine) is linked at Asn498. An EGF-like 3 domain is found at 698 to 737 (GKNRCGDNNGGCTHLCLPSGQNYTCACPTGFRKINSHACA). 3 disulfides stabilise this stretch: Cys702/Cys713, Cys709/Cys722, and Cys724/Cys736. The N-linked (GlcNAc...) asparagine glycan is linked to Asn719. LDL-receptor class B repeat units lie at residues 785 to 827 (DHVY…DWVT), 828 to 870 (NKLY…EPMG), 871 to 914 (GYMY…DYGS), 915 to 956 (QRLY…LYGQ), and 957 to 998 (RIYW…FHRQ). Asn901 carries an N-linked (GlcNAc...) asparagine glycan. The N-linked (GlcNAc...) asparagine glycan is linked to Asn1077. LDL-receptor class B repeat units follow at residues 1093–1135 (GKVY…DAIG), 1136–1178 (RKVY…YHEM), 1179–1222 (GFMY…DKTS), 1223–1263 (SQLL…LLDS), 1264–1306 (YIYW…DRAQ), 1397–1439 (GKVY…DWVA), 1440–1482 (RNLY…FPRK), 1483–1526 (GYLF…DYDT), 1527–1568 (RRIY…QDRW), and 1569–1610 (IYWT…SPQR). Asn1415 and Asn1467 each carry an N-linked (GlcNAc...) asparagine glycan. Positions 1661–1696 (ATSMNEKSPVLPNTLPTTLHSSTTKTRTSLEGAGGR) are disordered. Positions 1674 to 1690 (TLPTTLHSSTTKTRTSL) are enriched in low complexity. Residues 1726–1746 (YAIGGLLSILLILLVIAALML) traverse the membrane as a helical segment. Residues 1747-1905 (YRHRKSKFTD…ERKLSSESQV (159 aa)) are Cytoplasmic-facing. The interval 1852 to 1905 (ASSGSLDDTETEQLLQEEQSECSSVHTAATPERRGSLPDTGWKHERKLSSESQV) is disordered. Positions 1882–1905 (PERRGSLPDTGWKHERKLSSESQV) are enriched in basic and acidic residues.

It belongs to the LDLR family. As to quaternary structure, homooligomer. Interacts with MUSK; the heterodimer forms an AGRIN receptor complex that binds AGRIN resulting in activation of MUSK. Interacts (via the extracellular domain) with SOST; the interaction facilitates the inhibition of Wnt signaling. Interacts with MESD; the interaction promotes glycosylation of LRP4 and its cell-surface expression. In terms of processing, N-glycosylation is required for cell surface location.

It is found in the cell membrane. Functionally, mediates SOST-dependent inhibition of bone formation. Functions as a specific facilitator of SOST-mediated inhibition of Wnt signaling. Plays a key role in the formation and the maintenance of the neuromuscular junction (NMJ), the synapse between motor neuron and skeletal muscle. Directly binds AGRIN and recruits it to the MUSK signaling complex. Mediates the AGRIN-induced phosphorylation of MUSK, the kinase of the complex. The activation of MUSK in myotubes induces the formation of NMJ by regulating different processes including the transcription of specific genes and the clustering of AChR in the postsynaptic membrane. Alternatively, may be involved in the negative regulation of the canonical Wnt signaling pathway, being able to antagonize the LRP6-mediated activation of this pathway. More generally, has been proposed to function as a cell surface endocytic receptor binding and internalizing extracellular ligands for degradation by lysosomes. Plays an essential role in the process of digit differentiation. In Mus musculus (Mouse), this protein is Low-density lipoprotein receptor-related protein 4 (Lrp4).